The sequence spans 719 residues: Delta-1-pyrroline-5-carboxylate synthase (719 aa).

The interval 1–293 (MDATRAFVKD…WVQVKETGVR (293 aa)) is glutamate 5-kinase. 3 residues coordinate substrate: serine 57, aspartate 154, and asparagine 173. Residues 193–194 (SD) and 233–239 (RGGMTAK) each bind ATP. The gamma-glutamyl phosphate reductase stretch occupies residues 294-719 (DMAVAARESS…KDLPLVAQNS (426 aa)).

The protein in the N-terminal section; belongs to the glutamate 5-kinase family. This sequence in the C-terminal section; belongs to the gamma-glutamyl phosphate reductase family. Expressed at high levels in leaves and is inducible in roots subjected to salt stress.

It catalyses the reaction L-glutamate + ATP = L-glutamyl 5-phosphate + ADP. It carries out the reaction L-glutamate 5-semialdehyde + phosphate + NADP(+) = L-glutamyl 5-phosphate + NADPH + H(+). It participates in amino-acid biosynthesis; L-proline biosynthesis; L-glutamate 5-semialdehyde from L-glutamate: step 1/2. The protein operates within amino-acid biosynthesis; L-proline biosynthesis; L-glutamate 5-semialdehyde from L-glutamate: step 2/2. With respect to regulation, feedback regulated by proline. In terms of biological role, P5CS plays a key role in proline biosynthesis, leading to osmoregulation in plants. This Mesembryanthemum crystallinum (Common ice plant) protein is Delta-1-pyrroline-5-carboxylate synthase (P5CS).